Here is a 244-residue protein sequence, read N- to C-terminus: Type III pantothenate kinase (244 aa).

12–19 (VVGNTHVR) provides a ligand contact to ATP. Residues Tyr-79 and 83-86 (GLDR) contribute to the substrate site. The active-site Proton acceptor is the Asp-85. Asp-105 serves as a coordination point for K(+). An ATP-binding site is contributed by Thr-108. Substrate is bound at residue Thr-163.

This sequence belongs to the type III pantothenate kinase family. As to quaternary structure, homodimer. The cofactor is NH4(+). K(+) serves as cofactor.

It localises to the cytoplasm. It catalyses the reaction (R)-pantothenate + ATP = (R)-4'-phosphopantothenate + ADP + H(+). The protein operates within cofactor biosynthesis; coenzyme A biosynthesis; CoA from (R)-pantothenate: step 1/5. Catalyzes the phosphorylation of pantothenate (Pan), the first step in CoA biosynthesis. This chain is Type III pantothenate kinase, found in Synechococcus sp. (strain JA-3-3Ab) (Cyanobacteria bacterium Yellowstone A-Prime).